We begin with the raw amino-acid sequence, 365 residues long: MAQVINTNYLSLVTQNNLNKSQGTLGSAIERLSSGLRINSAKDDAAGQAIANRFTSNVNGLTQASRNANDGISIAQTTEGALNEINNNLQRIRELTVQAKNGTNSNSDITSIQNEVKNVLDEINRISEQTQFNGVKVLSGEKSEMVIQVGTNDNETIKFNLDKVDNDTLGVASDKLFDTKTEKKGVTAAGAGVTDAKKINAAATLDMMVSLVKEFNLDGKPVTDKFIVTKGGKDYVATKSDFELDATGTKLGLKASATTEFKVDAGKDVKTLNVKDDALATLDKAINTIDESRSKLGAIQNRFESTINNLNNTVNNLSASRSRILDADYATEVSNMSRGQILQQAGTSVLAQANQVPQTVLSLLR.

The protein belongs to the bacterial flagellin family.

The protein resides in the secreted. The protein localises to the bacterial flagellum. Functionally, flagellin is the subunit protein which polymerizes to form the filaments of bacterial flagella. The chain is Flagellin 1 (fliC1) from Proteus mirabilis.